Here is a 125-residue protein sequence, read N- to C-terminus: Actin, alpha skeletal muscle (125 aa).

It belongs to the actin family. In terms of assembly, polymerization of globular actin (G-actin) leads to a structural filament (F-actin) in the form of a two-stranded helix. Each actin can bind to 4 others. Post-translationally, methylated at His-75 by SETD3.

It is found in the cytoplasm. The protein localises to the cytoskeleton. Its function is as follows. Actins are highly conserved proteins that are involved in various types of cell motility and are ubiquitously expressed in all eukaryotic cells. This is Actin, alpha skeletal muscle from Pleurodeles waltl (Iberian ribbed newt).